Here is a 212-residue protein sequence, read N- to C-terminus: Ras-related protein Rab-2A (212 aa).

Ala2 is subject to N-acetylalanine. Positions 2-19 (AYAYLFKYIIIGDTGVGK) are required for interaction with PRKCI. Residues Gly16, Val17, Gly18, Lys19, Ser20, Cys21, and Thr38 each coordinate GTP. Ser20 is a binding site for Mg(2+). Residues 37–42 (LTIGVE) carry the Switch 1 motif. Thr38 and Asp61 together coordinate Mg(2+). The Switch 2 signature appears at 63–72 (AGQESFRSIT). GTP contacts are provided by Gly64, Asn119, Lys120, Asp122, Ala150, and Lys151. 2 S-geranylgeranyl cysteine lipidation sites follow: Cys211 and Cys212.

This sequence belongs to the small GTPase superfamily. Rab family. As to quaternary structure, interacts with PRKCI. Interacts with TRIP11. Interacts (in GTP-bound form) with GARIN1B. Interacts (GTP-bound) with HOPS complex component VPS39; interaction contributes to obtaining a functional HOPS complex that promotes autophagosome-lysosome membrane fusion driven by STX17-SNAP29-VAMP8. May interact with VPS41. Mg(2+) is required as a cofactor. In terms of processing, prenylated. Prenylation is required for association with cellular membranes.

Its subcellular location is the endoplasmic reticulum-Golgi intermediate compartment membrane. The protein localises to the melanosome. It localises to the endoplasmic reticulum membrane. The protein resides in the golgi apparatus membrane. It is found in the cytoplasmic vesicle. Its subcellular location is the secretory vesicle. The protein localises to the acrosome. It localises to the autophagosome membrane. The enzyme catalyses GTP + H2O = GDP + phosphate + H(+). Regulated by guanine nucleotide exchange factors (GEFs) which promote the exchange of bound GDP for free GTP, GTPase activating proteins (GAPs) which increase the GTP hydrolysis activity, and GDP dissociation inhibitors (GDIs) which inhibit the dissociation of the nucleotide from the GTPase. Functionally, the small GTPases Rab are key regulators of intracellular membrane trafficking, from the formation of transport vesicles to their fusion with membranes. Rabs cycle between active GTP-bound and inactive GDP-bound states. In their active state, drive transport of vesicular carriers from donor organelles to acceptor organelles to regulate the membrane traffic that maintains organelle identity and morphology. RAB2A regulates autophagy by promoting autophagosome-lysosome fusion via recruitment of the HOPS endosomal tethering complex; this process involves autophagosomal RAB2A and lysosomal RAB39A recruitment of HOPS subcomplexes VPS39-VPS11 and VPS41-VPS16-VPS18-VPS33A, respectively, which assemble into a functional complex to mediate membrane tethering and SNAREs-driven membrane fusion. Required for protein transport from the endoplasmic reticulum to the Golgi complex. Regulates the compacted morphology of the Golgi. Together with RAB2B, redundantly required for efficient autophagic flux. In Canis lupus familiaris (Dog), this protein is Ras-related protein Rab-2A (RAB2A).